Here is a 225-residue protein sequence, read N- to C-terminus: 2-C-methyl-D-erythritol 4-phosphate cytidylyltransferase (225 aa).

It belongs to the IspD/TarI cytidylyltransferase family. IspD subfamily.

The catalysed reaction is 2-C-methyl-D-erythritol 4-phosphate + CTP + H(+) = 4-CDP-2-C-methyl-D-erythritol + diphosphate. Its pathway is isoprenoid biosynthesis; isopentenyl diphosphate biosynthesis via DXP pathway; isopentenyl diphosphate from 1-deoxy-D-xylulose 5-phosphate: step 2/6. In terms of biological role, catalyzes the formation of 4-diphosphocytidyl-2-C-methyl-D-erythritol from CTP and 2-C-methyl-D-erythritol 4-phosphate (MEP). This chain is 2-C-methyl-D-erythritol 4-phosphate cytidylyltransferase, found in Haemophilus influenzae (strain 86-028NP).